We begin with the raw amino-acid sequence, 336 residues long: Phospho-N-acetylmuramoyl-pentapeptide-transferase (336 aa).

Helical transmembrane passes span 3–23 (LSIM…PRFI), 52–72 (MGGT…SIIL), 79–99 (NLGA…IGFL), 123–143 (LIAG…SAIN), 144–164 (IFGF…FWVV), 175–195 (GIDG…GIIA), 201–221 (FDIL…FVFN), 227–247 (VFMG…ISIA), 255–275 (LFIG…VAYF), and 315–335 (VDAF…AILY).

The protein belongs to the glycosyltransferase 4 family. MraY subfamily. Mg(2+) serves as cofactor.

The protein resides in the cell membrane. It catalyses the reaction UDP-N-acetyl-alpha-D-muramoyl-L-alanyl-gamma-D-glutamyl-L-lysyl-D-alanyl-D-alanine + di-trans,octa-cis-undecaprenyl phosphate = Mur2Ac(oyl-L-Ala-gamma-D-Glu-L-Lys-D-Ala-D-Ala)-di-trans,octa-cis-undecaprenyl diphosphate + UMP. The protein operates within cell wall biogenesis; peptidoglycan biosynthesis. In terms of biological role, catalyzes the initial step of the lipid cycle reactions in the biosynthesis of the cell wall peptidoglycan: transfers peptidoglycan precursor phospho-MurNAc-pentapeptide from UDP-MurNAc-pentapeptide onto the lipid carrier undecaprenyl phosphate, yielding undecaprenyl-pyrophosphoryl-MurNAc-pentapeptide, known as lipid I. The sequence is that of Phospho-N-acetylmuramoyl-pentapeptide-transferase from Streptococcus agalactiae serotype Ia (strain ATCC 27591 / A909 / CDC SS700).